Reading from the N-terminus, the 737-residue chain is Palmitoyltransferase akr1 (737 aa).

Residues 1–60 (MSSGDPPSGLQASGSNSSAALGLSPPSAPSGKSAATPPKVATDDASVELSSMKSERSPAK) are disordered. Topologically, residues 1-314 (MSSGDPPSGL…YVRDKAIMSK (314 aa)) are cytoplasmic. The span at 7–38 (PSGLQASGSNSSAALGLSPPSAPSGKSAATPP) shows a compositional bias: low complexity. 5 ANK repeats span residues 97–126 (EGIT…DVNA), 131–160 (SVAT…DPLL), 164–193 (QGYN…PVDV), 197–226 (QGHT…NPNA), and 230–259 (GGLA…DRFA). 2 consecutive transmembrane segments (helical) span residues 315–335 (FFFF…SNMV) and 336–356 (VYFA…VAKK). At 357 to 372 (AASQGPSEFRIIQKTP) the chain is on the cytoplasmic side. A helical membrane pass occupies residues 373–393 (FLAGVFAGSLFWVFVRYVLYV). Over 394 to 402 (LPATYSTNP) the chain is Lumenal. The helical transmembrane segment at 403–423 (FLNLGFVVFFSLTTYFYFYSM) threads the bilayer. Over 424-500 (VADPGYVPKL…NCVGVNNLRQ (77 aa)) the chain is Cytoplasmic. Residues 456-506 (NFCVYCMIRRPLRSKHCRRCSRCVAKHDHHCPWIDNCVGVNNLRQFVLYIL) form the DHHC domain. C486 serves as the catalytic S-palmitoyl cysteine intermediate. A helical transmembrane segment spans residues 501-521 (FVLYILCLEIGIILFLHLTFN). At 522 to 549 (YINGLPAPAEPICNILNDQICSFVLRDT) the chain is on the lumenal side. Residues 550–570 (FTLLLDVWIAIQLVWVTMLGV) form a helical membrane-spanning segment. Topologically, residues 571–737 (VQLVQVSRNQ…VAYDEAADIV (167 aa)) are cytoplasmic.

Belongs to the DHHC palmitoyltransferase family. AKR/ZDHHC17 subfamily.

The protein localises to the early endosome membrane. Its subcellular location is the golgi apparatus membrane. The catalysed reaction is L-cysteinyl-[protein] + hexadecanoyl-CoA = S-hexadecanoyl-L-cysteinyl-[protein] + CoA. Its function is as follows. Palmitoyltransferase specific for casein kinase 1. The sequence is that of Palmitoyltransferase akr1 (akr1) from Emericella nidulans (strain FGSC A4 / ATCC 38163 / CBS 112.46 / NRRL 194 / M139) (Aspergillus nidulans).